A 275-amino-acid chain; its full sequence is MANFTAADVKELRDRLGAGMMDSKNALVEADGDIEKAIEILRLKGQKGNAKRGDRSTAEGLVAASEQDGAATLIELACETDFVAKNDKFIALSESVLAAVVAAGASTVEEALQAPAGEQTVDQLISDRAAILGEKIALRRVARLAGEHQEIYLHRTSKDLPPQVGVVVDYSGTDAETARSIAQHIAFANPEYLAREDVPADKVEAERAIVTEISRNEGKPEAALPKIIEGRLTGFFKQVALLEQDYAKDNKQSVKKVVEAAGLTVTGFARFKVGA.

Residues Thr80–Val83 form an involved in Mg(2+) ion dislocation from EF-Tu region.

Belongs to the EF-Ts family.

It localises to the cytoplasm. Functionally, associates with the EF-Tu.GDP complex and induces the exchange of GDP to GTP. It remains bound to the aminoacyl-tRNA.EF-Tu.GTP complex up to the GTP hydrolysis stage on the ribosome. This is Elongation factor Ts from Clavibacter sepedonicus (Clavibacter michiganensis subsp. sepedonicus).